The following is a 351-amino-acid chain: Transmembrane protein 255A (351 aa).

Helical transmembrane passes span 30–50 (IYVTVTLLIVSVLILTVGLAA), 57–77 (VTVGGYYPGVILGFGSFLGII), 89–109 (LVASIVFISFGVIAAFCCAIV), and 226–246 (TILNIVGLFLGIITAAVLGGF). The disordered stretch occupies residues 302–331 (FPSSPPSGLSDEQEPQSPSPSPSYMWSSSA).

Belongs to the TMEM255 family.

It localises to the membrane. In Rattus norvegicus (Rat), this protein is Transmembrane protein 255A (Tmem255a).